Here is a 371-residue protein sequence, read N- to C-terminus: Tetraacyldisaccharide 4'-kinase (371 aa).

48–55 contributes to the ATP binding site; that stretch reads SAGGTGKT.

Belongs to the LpxK family.

The catalysed reaction is a lipid A disaccharide + ATP = a lipid IVA + ADP + H(+). It functions in the pathway glycolipid biosynthesis; lipid IV(A) biosynthesis; lipid IV(A) from (3R)-3-hydroxytetradecanoyl-[acyl-carrier-protein] and UDP-N-acetyl-alpha-D-glucosamine: step 6/6. Its function is as follows. Transfers the gamma-phosphate of ATP to the 4'-position of a tetraacyldisaccharide 1-phosphate intermediate (termed DS-1-P) to form tetraacyldisaccharide 1,4'-bis-phosphate (lipid IVA). The chain is Tetraacyldisaccharide 4'-kinase from Chlorobium chlorochromatii (strain CaD3).